We begin with the raw amino-acid sequence, 315 residues long: Putative methyltransferase NSUN5C (315 aa).

Residues 50-56, aspartate 74, arginine 79, and aspartate 121 contribute to the S-adenosyl-L-methionine site; that span reads VPPQAIK. Cysteine 175 functions as the Nucleophile in the catalytic mechanism. The segment at 245–269 is disordered; sequence TSASQAKASAPERTPSPAPKRKKRA.

The protein belongs to the class I-like SAM-binding methyltransferase superfamily. RsmB/NOP family. In terms of tissue distribution, ubiquitous.

In terms of biological role, may have S-adenosyl-L-methionine-dependent methyl-transferase activity. The polypeptide is Putative methyltransferase NSUN5C (NSUN5P2) (Homo sapiens (Human)).